A 689-amino-acid chain; its full sequence is Elongation factor G (689 aa).

The tr-type G domain occupies 8 to 282 (LNTRNIGIMA…AVVDYLPSPL (275 aa)). GTP-binding positions include 17–24 (AHIDAGKT), 81–85 (DTPGH), and 135–138 (NKMD).

It belongs to the TRAFAC class translation factor GTPase superfamily. Classic translation factor GTPase family. EF-G/EF-2 subfamily.

It is found in the cytoplasm. Functionally, catalyzes the GTP-dependent ribosomal translocation step during translation elongation. During this step, the ribosome changes from the pre-translocational (PRE) to the post-translocational (POST) state as the newly formed A-site-bound peptidyl-tRNA and P-site-bound deacylated tRNA move to the P and E sites, respectively. Catalyzes the coordinated movement of the two tRNA molecules, the mRNA and conformational changes in the ribosome. In Mycoplasma mycoides subsp. mycoides SC (strain CCUG 32753 / NCTC 10114 / PG1), this protein is Elongation factor G.